The primary structure comprises 309 residues: MLEVVTAGEPLVALVPQEPGHLRGKRLLEVYVGGAEVNVAVALARLGVKVGFVGRVGEDELGAMVEERLRAEGVDLTHFRRAPGFTGLYLREYLPLGQGRVFYYRKGSAGSALAPGAFDPDYLEGVRFLHLSGITPALSPEARAFSLWAMEEAKRRGVRVSLDVNYRQTLWSPEEARGFLERALPGVDLLFLSEEEAELLFGRVEEALRALSAPEVVLKRGAKGAWAFVDGRRVEGSAFAVEAVDPVGAGDAFAAGYLAGAVWGLPVEERLRLANLLGASVAASRGDHEGAPYREDLEVLLKATQTFMR.

Substrate-binding positions include 34–38, Tyr89, 103–105, and Arg167; these read GAEVN and YYR. ATP is bound by residues 165–167, Ser193, 219–225, 248–251, and Asn275; these read NYR, KRGAKGA, and GAGD. Residue Asp251 participates in substrate binding. Asp251 (proton acceptor) is an active-site residue. Asp287 provides a ligand contact to substrate.

It belongs to the carbohydrate kinase pfkB family. As to quaternary structure, homohexamer; trimer of dimers.

It carries out the reaction 2-dehydro-3-deoxy-D-gluconate + ATP = 2-dehydro-3-deoxy-6-phospho-D-gluconate + ADP + H(+). It functions in the pathway carbohydrate acid metabolism; 2-dehydro-3-deoxy-D-gluconate degradation; D-glyceraldehyde 3-phosphate and pyruvate from 2-dehydro-3-deoxy-D-gluconate: step 1/2. In terms of biological role, involved in the degradation of glucose via the semi-phosphorylative Entner-Doudoroff pathway. Catalyzes the phosphorylation of 2-keto-3-deoxygluconate (KDG) to produce 2-keto-3-deoxy-6-phosphogluconate (KDPG). The sequence is that of 2-dehydro-3-deoxygluconokinase (kdgK) from Thermus thermophilus (strain ATCC 27634 / DSM 579 / HB8).